We begin with the raw amino-acid sequence, 246 residues long: LexA repressor (246 aa).

The disordered stretch occupies residues 1–34; it reads MATPQTGKKTPSRRVSELPDGPPDATGLTPRQQR. Positions 52 to 72 form a DNA-binding region, H-T-H motif; the sequence is MREIGEAVGLTSSSSVAHQLK. Catalysis depends on for autocatalytic cleavage activity residues Ser-170 and Lys-207.

The protein belongs to the peptidase S24 family. As to quaternary structure, homodimer.

It carries out the reaction Hydrolysis of Ala-|-Gly bond in repressor LexA.. Its function is as follows. Represses a number of genes involved in the response to DNA damage (SOS response), including recA and lexA. In the presence of single-stranded DNA, RecA interacts with LexA causing an autocatalytic cleavage which disrupts the DNA-binding part of LexA, leading to derepression of the SOS regulon and eventually DNA repair. The protein is LexA repressor of Nocardioides sp. (strain ATCC BAA-499 / JS614).